We begin with the raw amino-acid sequence, 837 residues long: DNA primase (837 aa).

A CHC2-type zinc finger spans residues 782–821 (CLRYNHRGSSKSVRVFLILHLKEETKLIVTFMSQCFANKC).

Belongs to the herpesviridae DNA primase family. In terms of assembly, associates with the helicase and the primase-associated factor to form the helicase-primase factor.

It is found in the host nucleus. Functionally, essential component of the helicase/primase complex. Unwinds the DNA at the replication forks and generates single-stranded DNA for both leading and lagging strand synthesis. The primase initiates primer synthesis and thereby produces large amount of short RNA primers on the lagging strand that the polymerase elongates using dNTPs. This is DNA primase (56) from Connochaetes taurinus (Blue wildebeest).